Reading from the N-terminus, the 358-residue chain is UDP-N-acetylglucosamine--N-acetylmuramyl-(pentapeptide) pyrophosphoryl-undecaprenol N-acetylglucosamine transferase (358 aa).

Residues 13–15 (TGG), Asn-125, Arg-162, Ser-190, Ile-244, 263–268 (ALTVAE), and Gln-289 contribute to the UDP-N-acetyl-alpha-D-glucosamine site.

Belongs to the glycosyltransferase 28 family. MurG subfamily.

The protein resides in the cell inner membrane. It catalyses the reaction di-trans,octa-cis-undecaprenyl diphospho-N-acetyl-alpha-D-muramoyl-L-alanyl-D-glutamyl-meso-2,6-diaminopimeloyl-D-alanyl-D-alanine + UDP-N-acetyl-alpha-D-glucosamine = di-trans,octa-cis-undecaprenyl diphospho-[N-acetyl-alpha-D-glucosaminyl-(1-&gt;4)]-N-acetyl-alpha-D-muramoyl-L-alanyl-D-glutamyl-meso-2,6-diaminopimeloyl-D-alanyl-D-alanine + UDP + H(+). Its pathway is cell wall biogenesis; peptidoglycan biosynthesis. Cell wall formation. Catalyzes the transfer of a GlcNAc subunit on undecaprenyl-pyrophosphoryl-MurNAc-pentapeptide (lipid intermediate I) to form undecaprenyl-pyrophosphoryl-MurNAc-(pentapeptide)GlcNAc (lipid intermediate II). The protein is UDP-N-acetylglucosamine--N-acetylmuramyl-(pentapeptide) pyrophosphoryl-undecaprenol N-acetylglucosamine transferase of Halorhodospira halophila (strain DSM 244 / SL1) (Ectothiorhodospira halophila (strain DSM 244 / SL1)).